The sequence spans 357 residues: DNA integrity scanning protein DisA (357 aa).

The DAC domain occupies 8 to 146; that stretch reads VKSMINILQL…GNLRYTLKDI (139 aa). ATP is bound by residues glycine 75, leucine 93, and 106 to 110; that span reads MRHRT.

The protein belongs to the DisA family. In terms of assembly, homooctamer. Mg(2+) serves as cofactor.

It catalyses the reaction 2 ATP = 3',3'-c-di-AMP + 2 diphosphate. Participates in a DNA-damage check-point that is active prior to asymmetric division when DNA is damaged. DisA forms globular foci that rapidly scan along the chromosomes during sporulation, searching for lesions. When a lesion is present, DisA pauses at the lesion site. This triggers a cellular response that culminates in a temporary block in sporulation initiation. In terms of biological role, also has diadenylate cyclase activity, catalyzing the condensation of 2 ATP molecules into cyclic di-AMP (c-di-AMP). c-di-AMP acts as a signaling molecule that couples DNA integrity with progression of sporulation. The rise in c-di-AMP level generated by DisA while scanning the chromosome, operates as a positive signal that advances sporulation; upon encountering a lesion, the DisA focus arrests at the damaged site and halts c-di-AMP synthesis. The polypeptide is DNA integrity scanning protein DisA (Bacillus anthracis (strain CDC 684 / NRRL 3495)).